The chain runs to 768 residues: Protein transport protein Sec23A (768 aa).

N-acetylthreonine is present on Thr2. Cys61, Cys66, Cys85, and Cys88 together coordinate Zn(2+). Phosphothreonine is present on Thr308. Residues 632-718 (PEPVLLDSSS…EHGGSQARFL (87 aa)) form a Gelsolin-like repeat.

Belongs to the SEC23/SEC24 family. SEC23 subfamily. COPII is composed of at least five proteins: the Sec23/24 complex, the Sec13/31 complex and Sar1. Interacts with SEC23IP. Interacts with HTR4. Interacts with SEC16A. Interacts with SLC6A4. Interacts (as part of the Sec23/24 complex) with SEC22B; recruits SEC22B into COPII-coated vesicles and allows the transport of this cargo from the endoplasmic reticulum to the Golgi. Interacts (via Gelsolin-like repeat) with MIA2 and MIA3; specifically involved in the transport of large cargos like the collagen COL7A1. Interacts with DDHD1. Interacts with TMEM39A. Interacts with SACM1L; this interaction is reduced in the absence of TMEM39A. Interacts with kinase FAM20C; transport of FAM20C from the endoplasmic reticulum to the Golgi is likely to be mediated by COPII vesicles.

It localises to the cytoplasmic vesicle. The protein resides in the COPII-coated vesicle membrane. Its subcellular location is the endoplasmic reticulum membrane. The protein localises to the cytoplasm. It is found in the cytosol. Component of the coat protein complex II (COPII) which promotes the formation of transport vesicles from the endoplasmic reticulum (ER). The coat has two main functions, the physical deformation of the endoplasmic reticulum membrane into vesicles and the selection of cargo molecules for their transport to the Golgi complex. Required for the translocation of insulin-induced glucose transporter SLC2A4/GLUT4 to the cell membrane. In Bos taurus (Bovine), this protein is Protein transport protein Sec23A.